The sequence spans 341 residues: Glucokinase (341 aa).

18–23 (GDIGGT) contributes to the ATP binding site.

This sequence belongs to the bacterial glucokinase family.

The protein localises to the cytoplasm. The catalysed reaction is D-glucose + ATP = D-glucose 6-phosphate + ADP + H(+). This chain is Glucokinase, found in Mesorhizobium japonicum (strain LMG 29417 / CECT 9101 / MAFF 303099) (Mesorhizobium loti (strain MAFF 303099)).